A 194-amino-acid chain; its full sequence is Molybdenum cofactor guanylyltransferase (194 aa).

Residues 12 to 14 (LAG), K25, N53, D70, and D100 each bind GTP. D100 is a binding site for Mg(2+).

It belongs to the MobA family. As to quaternary structure, monomer. Mg(2+) is required as a cofactor.

The protein resides in the cytoplasm. It catalyses the reaction Mo-molybdopterin + GTP + H(+) = Mo-molybdopterin guanine dinucleotide + diphosphate. Its function is as follows. Transfers a GMP moiety from GTP to Mo-molybdopterin (Mo-MPT) cofactor (Moco or molybdenum cofactor) to form Mo-molybdopterin guanine dinucleotide (Mo-MGD) cofactor. The protein is Molybdenum cofactor guanylyltransferase of Aliivibrio fischeri (strain MJ11) (Vibrio fischeri).